The following is a 190-amino-acid chain: Putative resolvase R80 (190 aa).

The H-T-H motif DNA-binding region spans 11–30; sequence SSVLGVHQRTLYQWDKKGWI. One can recognise a Resolvase/invertase-type recombinase catalytic domain in the interval 61–190; the sequence is LSICYVRVSS…RNGSRKYSNK (130 aa). Positions 67-92 form a coiled coil; it reads RVSSNSQKDDLERQIKFMKKKYPNHT. Catalysis depends on Ser69, which acts as the O-(5'-phospho-DNA)-serine intermediate.

This sequence belongs to the site-specific recombinase resolvase family.

Resolvase catalyzes the resolution (a site-specific recombination) of the cointegrated replicon to yield the final transposition products. The protein is Putative resolvase R80 of Acanthamoeba polyphaga mimivirus (APMV).